A 117-amino-acid polypeptide reads, in one-letter code: Chondroitin proteoglycan 7 (117 aa).

An N-terminal signal peptide occupies residues 1 to 19 (MQTITLLALLACIAVPIFA). A disordered region spans residues 31–97 (VEASGEGSGE…SGENLSNGIV (67 aa)). Low complexity-rich tracts occupy residues 32-41 (EASGEGSGES) and 48-57 (ESSGEGSGES). O-linked (Xyl...) (chondroitin sulfate) serine glycans are attached at residues Ser66, Ser70, Ser74, Ser84, and Ser88. The span at 75–95 (GASDAVLESSGEGSGENLSNG) shows a compositional bias: low complexity. Asn91 carries N-linked (GlcNAc...) asparagine glycosylation.

The sequence is that of Chondroitin proteoglycan 7 (cpg-7) from Caenorhabditis briggsae.